The following is a 274-amino-acid chain: Octanoyl-[GcvH]:protein N-octanoyltransferase (274 aa).

A BPL/LPL catalytic domain is found at 37–242 (QGNDAVVRTW…AMKTLGATLS (206 aa)). Cys141 acts as the Acyl-thioester intermediate in catalysis.

This sequence belongs to the octanoyltransferase LipL family.

It catalyses the reaction N(6)-octanoyl-L-lysyl-[glycine-cleavage complex H protein] + L-lysyl-[lipoyl-carrier protein] = N(6)-octanoyl-L-lysyl-[lipoyl-carrier protein] + L-lysyl-[glycine-cleavage complex H protein]. It participates in protein modification; protein lipoylation via endogenous pathway; protein N(6)-(lipoyl)lysine from octanoyl-[acyl-carrier-protein]. Catalyzes the amidotransfer (transamidation) of the octanoyl moiety from octanoyl-GcvH to the lipoyl domain of the E2 subunit of lipoate-dependent enzymes. The protein is Octanoyl-[GcvH]:protein N-octanoyltransferase of Macrococcus caseolyticus (strain JCSC5402) (Macrococcoides caseolyticum).